Reading from the N-terminus, the 382-residue chain is Queuine tRNA-ribosyltransferase (382 aa).

Catalysis depends on Asp96, which acts as the Proton acceptor. Substrate-binding positions include Asp96 to Phe100, Asp151, Gln194, and Gly221. Positions Gly252–Ser258 are RNA binding. The Nucleophile role is filled by Asp271. Positions Thr276 to Arg280 are RNA binding; important for wobble base 34 recognition. Zn(2+) contacts are provided by Cys309, Cys311, Cys314, and His340.

This sequence belongs to the queuine tRNA-ribosyltransferase family. Homodimer. Within each dimer, one monomer is responsible for RNA recognition and catalysis, while the other monomer binds to the replacement base PreQ1. It depends on Zn(2+) as a cofactor.

It catalyses the reaction 7-aminomethyl-7-carbaguanine + guanosine(34) in tRNA = 7-aminomethyl-7-carbaguanosine(34) in tRNA + guanine. It participates in tRNA modification; tRNA-queuosine biosynthesis. Catalyzes the base-exchange of a guanine (G) residue with the queuine precursor 7-aminomethyl-7-deazaguanine (PreQ1) at position 34 (anticodon wobble position) in tRNAs with GU(N) anticodons (tRNA-Asp, -Asn, -His and -Tyr). Catalysis occurs through a double-displacement mechanism. The nucleophile active site attacks the C1' of nucleotide 34 to detach the guanine base from the RNA, forming a covalent enzyme-RNA intermediate. The proton acceptor active site deprotonates the incoming PreQ1, allowing a nucleophilic attack on the C1' of the ribose to form the product. After dissociation, two additional enzymatic reactions on the tRNA convert PreQ1 to queuine (Q), resulting in the hypermodified nucleoside queuosine (7-(((4,5-cis-dihydroxy-2-cyclopenten-1-yl)amino)methyl)-7-deazaguanosine). This chain is Queuine tRNA-ribosyltransferase, found in Lactococcus lactis subsp. cremoris (strain SK11).